We begin with the raw amino-acid sequence, 245 residues long: Photosystem II protein PSBS1 (245 aa).

Residues 1-25 (MAMTLSTKAFAQRGVSARKNTVRVY) constitute a chloroplast transit peptide. 4 helical membrane passes run 72 to 92 (LFVG…EILT), 108 to 128 (GIEV…AAVL), 185 to 205 (LGFA…LAQF), and 217 to 237 (EFGL…EGSG).

It belongs to the ELIP/psbS family.

Its subcellular location is the plastid. It localises to the chloroplast thylakoid membrane. Its function is as follows. Required for non-photochemical quenching (NPQ), a mechanism that converts and dissipates the harmful excess absorbed light energy into heat and protect the photosynthetic apparatus from photo-oxidative damage. Seems involved in the activation of NPQ, possibly by promoting conformational changes required for activation of LHCSR3-dependent quenching in the antenna of photosystem II (PSII). This is Photosystem II protein PSBS1 from Chlamydomonas reinhardtii (Chlamydomonas smithii).